The sequence spans 487 residues: Iron-sulfur cluster assembly SufBD family protein ycf24 (487 aa).

Belongs to the iron-sulfur cluster assembly SufBD family.

It localises to the plastid. The protein localises to the chloroplast. This is Iron-sulfur cluster assembly SufBD family protein ycf24 (ycf24) from Pyropia yezoensis (Susabi-nori).